Consider the following 367-residue polypeptide: 3-dehydroquinate synthase (367 aa).

NAD(+) is bound by residues 108–112 (GVIGD), 132–133 (TT), Lys145, and Lys154. The Zn(2+) site is built by Glu187, His249, and His267.

The protein belongs to the sugar phosphate cyclases superfamily. Dehydroquinate synthase family. It depends on Co(2+) as a cofactor. Zn(2+) is required as a cofactor. The cofactor is NAD(+).

It localises to the cytoplasm. It carries out the reaction 7-phospho-2-dehydro-3-deoxy-D-arabino-heptonate = 3-dehydroquinate + phosphate. Its pathway is metabolic intermediate biosynthesis; chorismate biosynthesis; chorismate from D-erythrose 4-phosphate and phosphoenolpyruvate: step 2/7. Catalyzes the conversion of 3-deoxy-D-arabino-heptulosonate 7-phosphate (DAHP) to dehydroquinate (DHQ). This is 3-dehydroquinate synthase from Paracoccus denitrificans (strain Pd 1222).